Consider the following 949-residue polypeptide: Protein translocase subunit SecA 1 (949 aa).

ATP contacts are provided by residues Gln86, 104–108 (GEGKT), and Asp493. The segment at 869–949 (VDGGARERAP…AKPPKSVKKR (81 aa)) is disordered. The span at 925–934 (SRRERREAAR) shows a compositional bias: basic and acidic residues.

Belongs to the SecA family. As to quaternary structure, monomer and homodimer. Part of the essential Sec protein translocation apparatus which comprises SecA, SecYEG and auxiliary proteins SecDF. Other proteins may also be involved.

Its subcellular location is the cell membrane. It localises to the cytoplasm. It catalyses the reaction ATP + H2O + cellular proteinSide 1 = ADP + phosphate + cellular proteinSide 2.. Its function is as follows. Part of the Sec protein translocase complex. Interacts with the SecYEG preprotein conducting channel. Has a central role in coupling the hydrolysis of ATP to the transfer of proteins into and across the cell membrane, serving as an ATP-driven molecular motor driving the stepwise translocation of polypeptide chains across the membrane. This Mycobacterium bovis (strain ATCC BAA-935 / AF2122/97) protein is Protein translocase subunit SecA 1.